A 308-amino-acid polypeptide reads, in one-letter code: METQNLTVVTEFILLGLTQSQDAQLLVFVLVLIFYLIILPGNFLIIFTIKSDPGLTAPLYFFLGNLALLDASYSFIVVPRMLVDFLSEKKVISYRSCITQLFFLHFLGAGEMFLLVVMAFDRYIAICRPLHYSTIMNPRACYALSLVLWLGGFIHSIVQVALILHLPFCGPNQLDNFFCDVPQVIKLACTNTFVVELLMVSNSGLLSLLCFLGLLASYAVILCRIREHSSEGKSKAISTCTTHIIIIFLMFGPAIFIYTCPFQAFPADKVVSLFHTVIFPLMNPVIYTLRNQEVKASMRKLLSQHMFC.

Topologically, residues 1–25 are extracellular; it reads METQNLTVVTEFILLGLTQSQDAQL. N-linked (GlcNAc...) asparagine glycosylation is present at N5. Residues 26 to 49 traverse the membrane as a helical segment; that stretch reads LVFVLVLIFYLIILPGNFLIIFTI. Residues 50-57 are Cytoplasmic-facing; it reads KSDPGLTA. Residues 58–79 form a helical membrane-spanning segment; sequence PLYFFLGNLALLDASYSFIVVP. Residues 80-100 are Extracellular-facing; the sequence is RMLVDFLSEKKVISYRSCITQ. Cysteines 97 and 189 form a disulfide. A helical transmembrane segment spans residues 101–120; sequence LFFLHFLGAGEMFLLVVMAF. Residues 121-139 are Cytoplasmic-facing; that stretch reads DRYIAICRPLHYSTIMNPR. A helical transmembrane segment spans residues 140–158; that stretch reads ACYALSLVLWLGGFIHSIV. The Extracellular segment spans residues 159–195; it reads QVALILHLPFCGPNQLDNFFCDVPQVIKLACTNTFVV. The helical transmembrane segment at 196–219 threads the bilayer; the sequence is ELLMVSNSGLLSLLCFLGLLASYA. The Cytoplasmic portion of the chain corresponds to 220–235; sequence VILCRIREHSSEGKSK. The chain crosses the membrane as a helical span at residues 236–258; the sequence is AISTCTTHIIIIFLMFGPAIFIY. The Extracellular segment spans residues 259–269; it reads TCPFQAFPADK. A helical membrane pass occupies residues 270–289; it reads VVSLFHTVIFPLMNPVIYTL. At 290–308 the chain is on the cytoplasmic side; sequence RNQEVKASMRKLLSQHMFC.

This sequence belongs to the G-protein coupled receptor 1 family.

It is found in the cell membrane. Odorant receptor. This Homo sapiens (Human) protein is Olfactory receptor 4N5 (OR4N5).